Here is a 331-residue protein sequence, read N- to C-terminus: MRVLRNFTIFFLFTALSLFRQISASAGDLHPVYVSCVNRCIENKCHGNPSDTSKLPLDLKLFRWDCGSNCGYECEITAENYFAAHNLPSQQYHGKWYFIRVFGIQELFSVFFSMLNFMIHYNGYHIMRRCIPDEHPAKRLCLSWAIVGMNAWVWSSVFHIRDTPITEKLDYFSAGAFVLFGSYCTLILMLRLDQLPGGKLLCWIIGVIFIAAFIAHVSYLSFYSFDYGYNMKANVAVGLVQNILWYYYSWSNRNSGLYWTRWPAYIVTSLMLATSLELFDFSPIANLIDAHALWHLSTVPITHYLYGFVVRKCSYDLTKGTFKIKAYDSSR.

Positions 1 to 24 (MRVLRNFTIFFLFTALSLFRQISA) are cleaved as a signal peptide. The Lumenal segment spans residues 25-100 (SAGDLHPVYV…QYHGKWYFIR (76 aa)). A helical transmembrane segment spans residues 101-121 (VFGIQELFSVFFSMLNFMIHY). The Cytoplasmic portion of the chain corresponds to 122–139 (NGYHIMRRCIPDEHPAKR). A helical membrane pass occupies residues 140–160 (LCLSWAIVGMNAWVWSSVFHI). At 161–168 (RDTPITEK) the chain is on the lumenal side. The chain crosses the membrane as a helical span at residues 169-189 (LDYFSAGAFVLFGSYCTLILM). At 190–199 (LRLDQLPGGK) the chain is on the cytoplasmic side. A helical transmembrane segment spans residues 200–220 (LLCWIIGVIFIAAFIAHVSYL). The Lumenal segment spans residues 221 to 232 (SFYSFDYGYNMK). The helical transmembrane segment at 233–250 (ANVAVGLVQNILWYYYSW) threads the bilayer. Residues 251 to 263 (SNRNSGLYWTRWP) lie on the Cytoplasmic side of the membrane. The helical transmembrane segment at 264-284 (AYIVTSLMLATSLELFDFSPI) threads the bilayer. The Lumenal portion of the chain corresponds to 285 to 289 (ANLID). The chain crosses the membrane as a helical span at residues 290 to 310 (AHALWHLSTVPITHYLYGFVV). At 311–331 (RKCSYDLTKGTFKIKAYDSSR) the chain is on the cytoplasmic side.

Belongs to the PGAP3/PER1 family.

Its subcellular location is the endoplasmic reticulum membrane. It is found in the vacuole membrane. Involved in the lipid remodeling steps of GPI-anchor maturation. Lipid remodeling steps consist in the generation of 2 saturated fatty chains at the sn-2 position of GPI-anchors proteins. Required for phospholipase A2 activity that removes an acyl-chain at the sn-2 position of GPI-anchors during the remodeling of GPI. Required for efficient transport of GPI-anchor proteins. The polypeptide is Protein PER1 homolog (Schizosaccharomyces pombe (strain 972 / ATCC 24843) (Fission yeast)).